A 9439-amino-acid chain; its full sequence is Extracellular matrix-binding protein ebh (9439 aa).

FIVAR domains follow at residues 1815–1871 (ARRR…VNSA), 1901–1957 (AKEQ…INDA), 1985–2041 (AYDT…VRDA), 2071–2127 (AKKR…ITSE), 2155–2211 (AYNK…VTQA), 2241–2297 (AKNR…ISSE), 2325–2381 (AYNK…VEDA), 2411–2467 (AKEK…ITEN), 2488–2551 (DTTS…VNNA), 2581–2638 (ARNR…STEI), 2665–2720 (AKNQ…IRTN), 2748–2804 (AKTA…VSDE), 2832–2888 (AYNQ…VNNA), 2918–2974 (AKEQ…ISNA), 3002–3058 (AYNQ…VTAA), 3088–3144 (AKQQ…ITNE), 3172–3228 (AYNQ…VAQA), 3258–3314 (AKNQ…ISDE), 3335–3398 (DTTE…VNNA), 3428–3484 (ARLN…ITTE), 3512–3567 (AKTA…IKTN), 3595–3650 (IKRQ…VKES), 3678–3733 (AKNR…IRQN), 3802–3860 (SMTA…IDQK), 3928–3983 (AMTQ…LDPA), 4056–4114 (AMQA…VNQK), 4182–4240 (SMGT…VDNA), 4308–4365 (AMHT…INQK), and 4433–4491 (VMEQ…IEQA). Basic and acidic residues predominate over residues 2495 to 2507 (EVRKLSRRGDTNN). The interval 2495–2514 (EVRKLSRRGDTNNKKPSSVS) is disordered. Residues 2925 to 2938 (AVDQVPSTEGMTQQ) show a composition bias toward polar residues. The segment at 2925–2951 (AVDQVPSTEGMTQQTKDDYNSKQQAAQ) is disordered. The tract at residues 4522–4542 (LSGLTNEQKPKENQAVNGAQT) is disordered. Positions 4559–4617 (SMQTLRDLVNNQNAIHSTSNYFNEDSTQKNTYDNAIDNGSTYITGQHNPELNKSTIDQT) constitute an FIVAR 30 domain. The disordered stretch occupies residues 4648-4671 (LGYLNDPQKSGEESLVNGSNTRSE). FIVAR domains follow at residues 4685–4743 (AMKQ…IEQK), 4811–4869 (AMQA…IEQA), 4937–4995 (AMSN…IEQA), 5063–5115 (AMEA…VLDK), 5189–5246 (AMLG…INQL), 5314–5372 (LMGA…VTTA), 5440–5498 (AMGE…IDQA), 5566–5624 (AMKK…ITNA), 5692–5750 (AMKQ…IADT), 5818–5875 (DMST…LQDL), 5943–6000 (AMKA…IKQA), 6068–6126 (KMEE…INRT), 6194–6252 (AMQQ…IQAI), and 6320–6378 (EMGT…IADA). The span at 5699–5712 (QVNQDDQISNSSPF) shows a compositional bias: polar residues. A disordered region spans residues 5699 to 5719 (QVNQDDQISNSSPFINEDSDK). The interval 6413-6434 (NNSQRQSEHDEINSAPSRTEVS) is disordered. 18 consecutive FIVAR domains span residues 6446-6504 (AMRQ…IEDA), 6572-6630 (AMKA…INRA), 6698-6755 (SMNQ…IDQA), 6823-6877 (TMKA…ANDE), 6949-7007 (AMKK…INTI), 7075-7133 (SMNT…VERA), 7201-7259 (DMKK…IENA), 7327-7384 (AMKH…IKQL), 7452-7510 (AMEN…IEHA), 7578-7636 (AMKA…INSI), 7704-7762 (AMET…VDIV), 7830-7888 (AMKS…VRQA), 7956-8010 (VMGK…TKQA), 8078-8137 (IMGE…IDTF), 8205-8264 (AMKS…IQGL), 8332-8391 (AMKD…VLGL), 8459-8518 (KMKL…IQHL), and 8587-8643 (AMQG…ANII). Residues 9306–9324 (TVGVITLTGLLSSFWLVLA) form a helical membrane-spanning segment. 3 stretches are compositionally biased toward basic and acidic residues: residues 9363 to 9375 (DKEEQIQNDDKHS), 9386 to 9395 (EKQLSEEDIH), and 9404 to 9413 (QNSDNKDTKQ). Residues 9363–9439 (DKEEQIQNDD…VVKTKKRSKK (77 aa)) form a disordered region. The segment covering 9414–9439 (KKVTSKKKKTPQSTKKVVKTKKRSKK) has biased composition (basic residues).

Its subcellular location is the cell membrane. The protein is Extracellular matrix-binding protein ebh (ebh) of Staphylococcus epidermidis (strain ATCC 35984 / DSM 28319 / BCRC 17069 / CCUG 31568 / BM 3577 / RP62A).